The following is a 201-amino-acid chain: Putative lipoprotein LppC (201 aa).

The first 23 residues, 1–23, serve as a signal peptide directing secretion; sequence MTSTLHRTPLATAGLALVVALGG. Cys-24 carries N-palmitoyl cysteine lipidation. Residue Cys-24 is the site of S-diacylglycerol cysteine attachment. Prevents bacterial uptake by a human macrophage-like cell line regions lie at residues 77–96, 97–116, and 117–136; these read GANV…AELA, LVVD…IVTG, and IAPG…GHSV. Positions 122–141 are disordered; the sequence is GSTADGQTPAGGHSVPNSGG.

The protein belongs to the UPF0098 family.

It is found in the cell membrane. It localises to the cell surface. Probably involved in bacterial recognition and uptake by its host (human). This Mycobacterium tuberculosis (strain ATCC 25618 / H37Rv) protein is Putative lipoprotein LppC.